A 208-amino-acid chain; its full sequence is Methylthioribulose-1-phosphate dehydratase (208 aa).

Zn(2+) contacts are provided by histidine 96 and histidine 98.

It belongs to the aldolase class II family. MtnB subfamily. It depends on Zn(2+) as a cofactor.

It catalyses the reaction 5-(methylsulfanyl)-D-ribulose 1-phosphate = 5-methylsulfanyl-2,3-dioxopentyl phosphate + H2O. Its pathway is amino-acid biosynthesis; L-methionine biosynthesis via salvage pathway; L-methionine from S-methyl-5-thio-alpha-D-ribose 1-phosphate: step 2/6. Catalyzes the dehydration of methylthioribulose-1-phosphate (MTRu-1-P) into 2,3-diketo-5-methylthiopentyl-1-phosphate (DK-MTP-1-P). This Pseudomonas fluorescens (strain Pf0-1) protein is Methylthioribulose-1-phosphate dehydratase.